We begin with the raw amino-acid sequence, 332 residues long: MKKIGVLTSGGDAPGMNAAIRSVVRTGIYHGLDVVGIRRGYAGLIEGDFYLMDRGSVADIIQRGGTILLSARCEEFKTEEGRQKALKKMKEEGIEGLVVIGGDGSFRGAEKVSKELGIPAIGIPGTIDNDLACTDFTIGFDTAMNTIIDTINKIRDTATSHERTFVVETMGRRSGFLTLMAGLAGGAESILIPEIDFDLDDVSQKLKKGYERGKLHSIILVAEGVGDDFSTNRDINHSKAFVIGKQIAEKTGLETRVIILGHIQRGGSPTAMDRILASRMGSKAVELLLASESNKMVGYVNNKLVTCDISEALSKEKQVEKDVYKLANILSM.

Glycine 11 contacts ATP. Residue 21–25 participates in ADP binding; sequence RSVVR. ATP contacts are provided by residues 72–73 and 102–105; these read RC and GDGS. Position 103 (aspartate 103) interacts with Mg(2+). 126–128 is a binding site for substrate; it reads TID. Aspartate 128 acts as the Proton acceptor in catalysis. Position 155 (arginine 155) interacts with ADP. Substrate contacts are provided by residues arginine 163 and 170–172; that span reads MGR. ADP contacts are provided by residues 186–188, arginine 212, and 214–216; these read GAE and KLH. Residues glutamate 223, arginine 256, and 262–265 each bind substrate; that span reads HIQR.

It belongs to the phosphofructokinase type A (PFKA) family. ATP-dependent PFK group I subfamily. Prokaryotic clade 'B1' sub-subfamily. In terms of assembly, homotetramer. Requires Mg(2+) as cofactor.

It is found in the cytoplasm. The enzyme catalyses beta-D-fructose 6-phosphate + ATP = beta-D-fructose 1,6-bisphosphate + ADP + H(+). The protein operates within carbohydrate degradation; glycolysis; D-glyceraldehyde 3-phosphate and glycerone phosphate from D-glucose: step 3/4. With respect to regulation, allosterically activated by ADP and other diphosphonucleosides, and allosterically inhibited by phosphoenolpyruvate. Catalyzes the phosphorylation of D-fructose 6-phosphate to fructose 1,6-bisphosphate by ATP, the first committing step of glycolysis. This is ATP-dependent 6-phosphofructokinase from Halothermothrix orenii (strain H 168 / OCM 544 / DSM 9562).